Consider the following 101-residue polypeptide: Urease subunit beta (101 aa).

The protein belongs to the urease beta subunit family. As to quaternary structure, heterotrimer of UreA (gamma), UreB (beta) and UreC (alpha) subunits. Three heterotrimers associate to form the active enzyme.

It localises to the cytoplasm. It catalyses the reaction urea + 2 H2O + H(+) = hydrogencarbonate + 2 NH4(+). It participates in nitrogen metabolism; urea degradation; CO(2) and NH(3) from urea (urease route): step 1/1. The protein is Urease subunit beta of Acaryochloris marina (strain MBIC 11017).